We begin with the raw amino-acid sequence, 219 residues long: Mediator of RNA polymerase II transcription subunit 21 (219 aa).

Residues 86 to 125 (SAEEQLHKIDSLQKKLVDIEDEKIHAIKKKDDLLKQVDDL) are a coiled coil. Positions 141 to 219 (SLAPENVQED…ISESISPGKI (79 aa)) are disordered. Basic and acidic residues-rich tracts occupy residues 166 to 181 (IEQKIANEKIESKIEG) and 191 to 204 (SDSKSADSELFMDK). A compositionally biased stretch (polar residues) spans 210–219 (ISESISPGKI).

This sequence belongs to the Mediator complex subunit 21 family. Component of the Mediator complex.

It localises to the nucleus. Functionally, component of the Mediator complex, a coactivator involved in the regulated transcription of nearly all RNA polymerase II-dependent genes. Mediator functions as a bridge to convey information from gene-specific regulatory proteins to the basal RNA polymerase II transcription machinery. Mediator is recruited to promoters by direct interactions with regulatory proteins and serves as a scaffold for the assembly of a functional preinitiation complex with RNA polymerase II and the general transcription factors. The sequence is that of Mediator of RNA polymerase II transcription subunit 21 (SRB7) from Candida glabrata (strain ATCC 2001 / BCRC 20586 / JCM 3761 / NBRC 0622 / NRRL Y-65 / CBS 138) (Yeast).